The primary structure comprises 303 residues: Nucleotide-binding protein USA300HOU_0794 (303 aa).

18–25 contacts ATP; the sequence is GLSGAGKS. 69-72 is a GTP binding site; that stretch reads DLRG.

This sequence belongs to the RapZ-like family.

Functionally, displays ATPase and GTPase activities. The chain is Nucleotide-binding protein USA300HOU_0794 from Staphylococcus aureus (strain USA300 / TCH1516).